We begin with the raw amino-acid sequence, 127 residues long: Flagellar assembly factor FliW (127 aa).

The protein belongs to the FliW family. Interacts with translational regulator CsrA and flagellin(s).

It is found in the cytoplasm. Acts as an anti-CsrA protein, binds CsrA and prevents it from repressing translation of its target genes, one of which is flagellin. Binds to flagellin and participates in the assembly of the flagellum. This chain is Flagellar assembly factor FliW, found in Campylobacter concisus (strain 13826).